The primary structure comprises 270 residues: Putative phosphoenolpyruvate synthase regulatory protein (270 aa).

150–157 (GVSRCGKT) contacts ADP.

Belongs to the pyruvate, phosphate/water dikinase regulatory protein family. PSRP subfamily.

The catalysed reaction is [pyruvate, water dikinase] + ADP = [pyruvate, water dikinase]-phosphate + AMP + H(+). It carries out the reaction [pyruvate, water dikinase]-phosphate + phosphate + H(+) = [pyruvate, water dikinase] + diphosphate. Its function is as follows. Bifunctional serine/threonine kinase and phosphorylase involved in the regulation of the phosphoenolpyruvate synthase (PEPS) by catalyzing its phosphorylation/dephosphorylation. This chain is Putative phosphoenolpyruvate synthase regulatory protein, found in Shewanella halifaxensis (strain HAW-EB4).